The following is a 271-amino-acid chain: Protein phosphatase 1 regulatory subunit 3B-B (271 aa).

Residues 56–59 (RVSF) carry the PP1-binding motif motif. Residues 119–227 (RNRLKADSVC…SNKGLNYRIV (109 aa)) enclose the CBM21 domain.

As to quaternary structure, interacts with glycogen, PPP1CC catalytic subunit of PP1 and PYGL. Associates with glycogen particles. Forms complexes with debranching enzyme, glycogen phosphorylase, glycogen synthase and phosphorylase kinase which is necessary for its regulation of PP1 activity.

Functionally, acts as a glycogen-targeting subunit for phosphatase PP1. Facilitates interaction of the PP1 with enzymes of the glycogen metabolism and regulates its activity. Suppresses the rate at which PP1 dephosphorylates (inactivates) glycogen phosphorylase and enhances the rate at which it activates glycogen synthase and therefore limits glycogen breakdown. This Xenopus laevis (African clawed frog) protein is Protein phosphatase 1 regulatory subunit 3B-B (ppp1r3b-b).